Here is a 450-residue protein sequence, read N- to C-terminus: Benzene 1,2-dioxygenase subunit alpha (450 aa).

The 110-residue stretch at 54–163 (WLLLGHETQI…VETYKGLIFA (110 aa)) folds into the Rieske domain. [2Fe-2S] cluster is bound by residues Cys-96, His-98, Cys-116, and His-119. 2 residues coordinate Fe cation: His-222 and His-228.

This sequence belongs to the bacterial ring-hydroxylating dioxygenase alpha subunit family. In terms of assembly, this dioxygenase system consists of four proteins: the two subunits of the hydroxylase component (BnzA and BnzB), a ferredoxin (BnzC) and a ferredoxin reductase (BnzD). Requires [2Fe-2S] cluster as cofactor. It depends on Fe cation as a cofactor.

It carries out the reaction benzene + NADH + O2 + H(+) = cis-1,2-dihydrobenzene-1,2-diol + NAD(+). The enzyme catalyses toluene + NADH + O2 + H(+) = (1S,2R)-3-methylcyclohexa-3,5-diene-1,2-diol + NAD(+). The protein operates within aromatic compound metabolism; benzene degradation; catechol from benzene: step 1/2. It functions in the pathway xenobiotic degradation; toluene degradation. Its pathway is xenobiotic degradation; xylene degradation. Functionally, catalyzes both the oxidation of benzene and toluene. The sequence is that of Benzene 1,2-dioxygenase subunit alpha (bnzA) from Pseudomonas putida (strain ATCC 700007 / DSM 6899 / JCM 31910 / BCRC 17059 / LMG 24140 / F1).